The primary structure comprises 309 residues: Extracellular agarase (309 aa).

The segment at residues 1 to 30 (MVNRRDLIKWSAVALGAGAGLAGPAPAAHA) is a signal peptide (tat-type signal). Positions 33-309 (LEWEQYPVPA…YRWVRTYQAV (277 aa)) constitute a GH16 domain. Glu-155 serves as the catalytic Nucleophile. Residue Glu-160 is the Proton donor of the active site.

Belongs to the glycosyl hydrolase 16 family. Post-translationally, predicted to be exported by the Tat system. The position of the signal peptide cleavage has been experimentally proven.

The protein resides in the secreted. The catalysed reaction is Hydrolysis of (1-&gt;4)-beta-D-galactosidic linkages in agarose, giving the tetramer as the predominant product.. The sequence is that of Extracellular agarase (dagA) from Streptomyces coelicolor (strain ATCC BAA-471 / A3(2) / M145).